The sequence spans 388 residues: Chorismate synthase (388 aa).

The NADP(+) site is built by arginine 39 and arginine 45. FMN contacts are provided by residues 130 to 132 (RSS), 251 to 252 (NA), glycine 296, 311 to 315 (KPIPT), and arginine 337.

This sequence belongs to the chorismate synthase family. As to quaternary structure, homotetramer. FMNH2 serves as cofactor.

It catalyses the reaction 5-O-(1-carboxyvinyl)-3-phosphoshikimate = chorismate + phosphate. It functions in the pathway metabolic intermediate biosynthesis; chorismate biosynthesis; chorismate from D-erythrose 4-phosphate and phosphoenolpyruvate: step 7/7. In terms of biological role, catalyzes the anti-1,4-elimination of the C-3 phosphate and the C-6 proR hydrogen from 5-enolpyruvylshikimate-3-phosphate (EPSP) to yield chorismate, which is the branch point compound that serves as the starting substrate for the three terminal pathways of aromatic amino acid biosynthesis. This reaction introduces a second double bond into the aromatic ring system. The protein is Chorismate synthase of Streptococcus pneumoniae serotype 2 (strain D39 / NCTC 7466).